We begin with the raw amino-acid sequence, 343 residues long: DNA-directed RNA polymerase subunit alpha (343 aa).

The segment at 1 to 243 (MTQEIDEKIP…EQLDIFINFD (243 aa)) is alpha N-terminal domain (alpha-NTD). The alpha C-terminal domain (alpha-CTD) stretch occupies residues 261-343 (ENPYLDKPVE…NAPSDAETEE (83 aa)).

The protein belongs to the RNA polymerase alpha chain family. As to quaternary structure, homodimer. The RNAP catalytic core consists of 2 alpha, 1 beta, 1 beta' and 1 omega subunit. When a sigma factor is associated with the core the holoenzyme is formed, which can initiate transcription.

The catalysed reaction is RNA(n) + a ribonucleoside 5'-triphosphate = RNA(n+1) + diphosphate. DNA-dependent RNA polymerase catalyzes the transcription of DNA into RNA using the four ribonucleoside triphosphates as substrates. In Desulfotalea psychrophila (strain LSv54 / DSM 12343), this protein is DNA-directed RNA polymerase subunit alpha.